Consider the following 421-residue polypeptide: Imidazolonepropionase (421 aa).

Fe(3+) is bound by residues H81 and H83. Zn(2+)-binding residues include H81 and H83. Residues R90, Y153, and H186 each coordinate 4-imidazolone-5-propanoate. Y153 is an N-formimidoyl-L-glutamate binding site. H251 is a Fe(3+) binding site. H251 is a binding site for Zn(2+). E254 contributes to the 4-imidazolone-5-propanoate binding site. D326 is a binding site for Fe(3+). D326 is a binding site for Zn(2+). Residues N328 and G330 each coordinate N-formimidoyl-L-glutamate. Residue S331 participates in 4-imidazolone-5-propanoate binding.

It belongs to the metallo-dependent hydrolases superfamily. HutI family. Zn(2+) is required as a cofactor. Requires Fe(3+) as cofactor.

The protein resides in the cytoplasm. It catalyses the reaction 4-imidazolone-5-propanoate + H2O = N-formimidoyl-L-glutamate. The protein operates within amino-acid degradation; L-histidine degradation into L-glutamate; N-formimidoyl-L-glutamate from L-histidine: step 3/3. Functionally, catalyzes the hydrolytic cleavage of the carbon-nitrogen bond in imidazolone-5-propanoate to yield N-formimidoyl-L-glutamate. It is the third step in the universal histidine degradation pathway. This Streptococcus pyogenes serotype M18 (strain MGAS8232) protein is Imidazolonepropionase.